A 277-amino-acid polypeptide reads, in one-letter code: Transport and Golgi organization protein 11 (277 aa).

The Cytoplasmic portion of the chain corresponds to 1–256 (MVTPQSPTPM…NNEQRTQREK (256 aa)). Disordered stretches follow at residues 124-148 (HFPS…NDLD) and 167-200 (VARM…LNQQ). Phosphoserine occurs at positions 127, 129, 132, and 133. The segment covering 174–200 (GNDTNSVESDSQLTTGSASKRSQLNQQ) has biased composition (polar residues). Position 177 is a phosphothreonine (Thr177). Phosphoserine is present on residues Ser179, Ser182, and Ser190. 2 positions are modified to phosphothreonine: Thr216 and Thr222. Residues 225-253 (EEILYLRRQLAKLNRRVLNIEINNEQRTQ) adopt a coiled-coil conformation. The chain crosses the membrane as a helical; Anchor for type IV membrane protein span at residues 257 to 274 (IVYCLGLAYFVLKTIFWL). Topologically, residues 275-277 (NRN) are lumenal.

The protein belongs to the Tango11 family.

Its subcellular location is the endoplasmic reticulum membrane. It is found in the mitochondrion outer membrane. The protein localises to the peroxisome. Functionally, may play a role in mitochondrial and peroxisomal fission. This is Transport and Golgi organization protein 11 (Tango11) from Drosophila melanogaster (Fruit fly).